The chain runs to 421 residues: CinA-like protein (421 aa).

Belongs to the CinA family.

The chain is CinA-like protein from Mycobacterium sp. (strain MCS).